The primary structure comprises 206 residues: Type III pantothenate kinase (206 aa).

Residue 5–12 (DIGNSTAK) coordinates ATP. Substrate is bound by residues tyrosine 67 and 72–75 (GVDR). Aspartate 74 functions as the Proton acceptor in the catalytic mechanism. Aspartate 89 contributes to the K(+) binding site. Serine 92 is a binding site for ATP. Threonine 144 is a substrate binding site.

The protein belongs to the type III pantothenate kinase family. In terms of assembly, homodimer. It depends on NH4(+) as a cofactor. K(+) serves as cofactor.

Its subcellular location is the cytoplasm. It catalyses the reaction (R)-pantothenate + ATP = (R)-4'-phosphopantothenate + ADP + H(+). Its pathway is cofactor biosynthesis; coenzyme A biosynthesis; CoA from (R)-pantothenate: step 1/5. Functionally, catalyzes the phosphorylation of pantothenate (Pan), the first step in CoA biosynthesis. This is Type III pantothenate kinase from Campylobacter hominis (strain ATCC BAA-381 / DSM 21671 / CCUG 45161 / LMG 19568 / NCTC 13146 / CH001A).